A 263-amino-acid polypeptide reads, in one-letter code: Dihydropteroate synthase type-3 (263 aa).

Residues 2–257 (SKIFGIVNIT…DVKSLSDALK (256 aa)) form the Pterin-binding domain. Residue Asn-9 coordinates Mg(2+). Ser-49 contacts 4-aminobenzoate. 3 residues coordinate (7,8-dihydropterin-6-yl)methyl diphosphate: Asp-82, Asn-101, and Asp-172. 6-hydroxymethyl-7,8-dihydropterin contacts are provided by Asn-101 and Asp-172. Position 177 (Phe-177) interacts with 4-aminobenzoate. Position 211 (Lys-211) interacts with (7,8-dihydropterin-6-yl)methyl diphosphate. A 6-hydroxymethyl-7,8-dihydropterin-binding site is contributed by Lys-211. Residue Ser-212 participates in 4-aminobenzoate binding. Position 245-247 (245-247 (RTH)) interacts with (7,8-dihydropterin-6-yl)methyl diphosphate.

Belongs to the DHPS family. Mg(2+) serves as cofactor.

The catalysed reaction is (7,8-dihydropterin-6-yl)methyl diphosphate + 4-aminobenzoate = 7,8-dihydropteroate + diphosphate. It functions in the pathway cofactor biosynthesis; tetrahydrofolate biosynthesis; 7,8-dihydrofolate from 2-amino-4-hydroxy-6-hydroxymethyl-7,8-dihydropteridine diphosphate and 4-aminobenzoate: step 1/2. Its function is as follows. Catalyzes the condensation of para-aminobenzoate (pABA) with 6-hydroxymethyl-7,8-dihydropterin diphosphate (DHPt-PP) to form 7,8-dihydropteroate (H2Pte), the immediate precursor of folate derivatives. Confers resistance to sulfonamide antibiotics, including sulfamethoxazole (SMX), sulfadiazine and sulfisoxazole. The protein is Dihydropteroate synthase type-3 of Escherichia coli.